The primary structure comprises 203 residues: FMN-dependent NADH:quinone oxidoreductase (203 aa).

Residue 143–146 (SNGG) participates in FMN binding.

This sequence belongs to the azoreductase type 1 family. As to quaternary structure, homodimer. The cofactor is FMN.

It carries out the reaction 2 a quinone + NADH + H(+) = 2 a 1,4-benzosemiquinone + NAD(+). It catalyses the reaction N,N-dimethyl-1,4-phenylenediamine + anthranilate + 2 NAD(+) = 2-(4-dimethylaminophenyl)diazenylbenzoate + 2 NADH + 2 H(+). In terms of biological role, quinone reductase that provides resistance to thiol-specific stress caused by electrophilic quinones. Functionally, also exhibits azoreductase activity. Catalyzes the reductive cleavage of the azo bond in aromatic azo compounds to the corresponding amines. In Streptococcus suis (strain 98HAH33), this protein is FMN-dependent NADH:quinone oxidoreductase.